The following is a 256-amino-acid chain: Thiazole synthase (256 aa).

The active-site Schiff-base intermediate with DXP is the K95. Residues G156, 182 to 183, and 204 to 205 each bind 1-deoxy-D-xylulose 5-phosphate; these read AG and NT.

Belongs to the ThiG family. In terms of assembly, homotetramer. Forms heterodimers with either ThiH or ThiS.

The protein resides in the cytoplasm. The enzyme catalyses [ThiS sulfur-carrier protein]-C-terminal-Gly-aminoethanethioate + 2-iminoacetate + 1-deoxy-D-xylulose 5-phosphate = [ThiS sulfur-carrier protein]-C-terminal Gly-Gly + 2-[(2R,5Z)-2-carboxy-4-methylthiazol-5(2H)-ylidene]ethyl phosphate + 2 H2O + H(+). The protein operates within cofactor biosynthesis; thiamine diphosphate biosynthesis. Functionally, catalyzes the rearrangement of 1-deoxy-D-xylulose 5-phosphate (DXP) to produce the thiazole phosphate moiety of thiamine. Sulfur is provided by the thiocarboxylate moiety of the carrier protein ThiS. In vitro, sulfur can be provided by H(2)S. In Escherichia coli O157:H7, this protein is Thiazole synthase.